The chain runs to 143 residues: Class II hydrophobin qid3 (143 aa).

An N-terminal signal peptide occupies residues 1–17; sequence MKFLTVAAVFFTAVLAA. A compositionally biased stretch (pro residues) spans 20 to 37; the sequence is NYPPPPPPTYAPPPPTYT. A disordered region spans residues 20–67; the sequence is NYPPPPPPTYAPPPPTYTLPPNGNGGGNGNGNGNGNGGGNGNGNGNTN. A run of 10 repeats spans residues 41-42, 43-44, 47-48, 49-50, 51-52, 53-54, 55-56, 59-60, 61-62, and 63-64. The tract at residues 41–64 is 10 X 2 AA repeats of N-G; that stretch reads NGNGGGNGNGNGNGNGGGNGNGNG. The span at 42–63 shows a compositional bias: gly residues; it reads GNGGGNGNGNGNGNGGGNGNGN. Cystine bridges form between Cys74–Cys124, Cys85–Cys97, and Cys125–Cys136.

The protein belongs to the cerato-ulmin hydrophobin family. As to quaternary structure, homotetramer. Further self-assembles to form highly ordered films at water-air interfaces through intermolecular interactions.

Its subcellular location is the secreted. The protein resides in the cell wall. Its function is as follows. Aerial growth, conidiation, and dispersal of filamentous fungi in the environment rely upon a capability of their secreting small amphipathic proteins called hydrophobins (HPBs) with low sequence identity. Class I can self-assemble into an outermost layer of rodlet bundles on aerial cell surfaces, conferring cellular hydrophobicity that supports fungal growth, development and dispersal; whereas Class II form highly ordered films at water-air interfaces through intermolecular interactions but contribute nothing to the rodlet structure. Qid3 is a class II hydrophobin that might acts as a chitinase inhibitor at the cell surface that blocks the degradation of the chitin rings localized in the budding region of dividing cells. This chain is Class II hydrophobin qid3, found in Trichoderma harzianum (Hypocrea lixii).